A 234-amino-acid chain; its full sequence is Phosphoribosylaminoimidazole-succinocarboxamide synthase (234 aa).

Belongs to the SAICAR synthetase family.

The enzyme catalyses 5-amino-1-(5-phospho-D-ribosyl)imidazole-4-carboxylate + L-aspartate + ATP = (2S)-2-[5-amino-1-(5-phospho-beta-D-ribosyl)imidazole-4-carboxamido]succinate + ADP + phosphate + 2 H(+). Its pathway is purine metabolism; IMP biosynthesis via de novo pathway; 5-amino-1-(5-phospho-D-ribosyl)imidazole-4-carboxamide from 5-amino-1-(5-phospho-D-ribosyl)imidazole-4-carboxylate: step 1/2. This Staphylococcus epidermidis (strain ATCC 35984 / DSM 28319 / BCRC 17069 / CCUG 31568 / BM 3577 / RP62A) protein is Phosphoribosylaminoimidazole-succinocarboxamide synthase.